The sequence spans 100 residues: Small ribosomal subunit protein uS14c (100 aa).

This sequence belongs to the universal ribosomal protein uS14 family. In terms of assembly, part of the 30S ribosomal subunit.

The protein resides in the plastid. It is found in the chloroplast. Functionally, binds 16S rRNA, required for the assembly of 30S particles. The polypeptide is Small ribosomal subunit protein uS14c (Staurastrum punctulatum (Green alga)).